A 5635-amino-acid chain; its full sequence is Hemicentin-1 (5635 aa).

Positions 1–21 (MISWEVVHTVFLFALLYSSLA) are cleaved as a signal peptide. The VWFA domain occupies 41–216 (TLAFVFDVTG…EVLKWVEEAV (176 aa)). N-linked (GlcNAc...) asparagine glycosylation is found at N349 and N390. Ig-like C2-type domains are found at residues 431 to 517 (PKVT…FDVS), 520 to 607 (PPVI…VFLT), 612 to 697 (PKVT…STLR), 702 to 788 (PKLM…ITLD), 793 to 883 (PVFI…TTVT), 890 to 976 (PLIG…TSVV), 981 to 1067 (PTIQ…VQLT), 1072 to 1166 (PRVF…VKLN), 1171 to 1255 (PKIQ…TEIT), 1262 to 1354 (PTVE…YNLK), 1358 to 1447 (PPVI…FNID), 1452 to 1541 (PTII…IKLT), 1546 to 1634 (PSIK…FHVD), 1638 to 1724 (PPMI…KEIK), 1733 to 1821 (PAIE…FEVT), 1826 to 1914 (PTIK…IQLH), 1919 to 2007 (PSLE…YSLQ), 2012 to 2097 (PSIS…RDID), 2104 to 2190 (PNIM…YNVN), 2195 to 2285 (PNIG…YNLQ), 2290 to 2379 (PTIT…YDLS), 2384 to 2470 (PSII…RKIF), 2478 to 2564 (PHIV…RSFS), 2571 to 2662 (PTIA…YEVK), 2666 to 2763 (PPII…VNIQ), 2766 to 2864 (PSFQ…YDVR), 2868 to 2959 (PPII…FNLN), 2964 to 3051 (PSVI…FSLT), 3056 to 3146 (PSIK…FHLN), 3151 to 3240 (PSIE…YFLS), 3245 to 3335 (PSVA…FNLN), 3340 to 3429 (PTIR…YNLQ), 3434 to 3516 (PNMD…GEVS), 3527 to 3615 (PHIN…YLVR), 3620 to 3708 (PNIA…FILT), 3713 to 3797 (PNIK…RRID), 3804 to 3892 (PSIA…VDLT), 3897 to 3983 (PSIA…VTLH), 3988 to 4076 (PVIQ…LNVQ), 4079 to 4164 (PVIS…TKLT), 4169 to 4255 (PRIR…VSLT), 4260 to 4344 (PTFT…GFVY), 4348 to 4435 (PPVF…MSLT), and 4440 to 4527 (PIIT…VIVQ). C451 and C499 are oxidised to a cystine. N528, N550, N573, and N620 each carry an N-linked (GlcNAc...) asparagine glycan. Cysteines 541 and 591 form a disulfide. An intrachain disulfide couples C633 to C681. A glycan (N-linked (GlcNAc...) asparagine) is linked at N693. A disulfide bridge connects residues C723 and C772. N-linked (GlcNAc...) asparagine glycosylation is present at N809. 2 disulfides stabilise this stretch: C814/C867 and C911/C960. An N-linked (GlcNAc...) asparagine glycan is attached at N970. 2 disulfides stabilise this stretch: C1002–C1051 and C1101–C1150. N1158 carries N-linked (GlcNAc...) asparagine glycosylation. C1192 and C1241 form a disulfide bridge. An N-linked (GlcNAc...) asparagine glycan is attached at N1272. C1288 and C1338 are disulfide-bonded. A glycan (N-linked (GlcNAc...) asparagine) is linked at N1369. 2 disulfide bridges follow: C1382–C1431 and C1475–C1525. N1552 is a glycosylation site (N-linked (GlcNAc...) asparagine). 4 cysteine pairs are disulfide-bonded: C1569/C1618, C1663/C1712, C1756/C1805, and C1848/C1898. N1929 is a glycosylation site (N-linked (GlcNAc...) asparagine). 2 disulfide bridges follow: C1942–C1991 and C2033–C2083. N-linked (GlcNAc...) asparagine glycosylation is found at N2112 and N2155. 3 disulfide bridges follow: C2125-C2174, C2218-C2269, and C2314-C2363. A glycan (N-linked (GlcNAc...) asparagine) is linked at N2395. 3 disulfides stabilise this stretch: C2408–C2457, C2501–C2550, and C2597–C2646. Residue N2689 is glycosylated (N-linked (GlcNAc...) asparagine). 2 disulfide bridges follow: C2696–C2745 and C2799–C2848. The N-linked (GlcNAc...) asparagine glycan is linked to N2887. C2894 and C2943 are joined by a disulfide. Residue N2973 is glycosylated (N-linked (GlcNAc...) asparagine). Cystine bridges form between C2986-C3035, C3081-C3130, C3173-C3224, C3268-C3319, C3364-C3413, and C3457-C3506. N3221 and N3300 each carry an N-linked (GlcNAc...) asparagine glycan. An N-linked (GlcNAc...) asparagine glycan is attached at N3530. 2 disulfides stabilise this stretch: C3550–C3599 and C3643–C3692. N-linked (GlcNAc...) asparagine glycans are attached at residues N3689 and N3727. Residues C3734 and C3783 are joined by a disulfide bond. N-linked (GlcNAc...) asparagine glycosylation is present at N3812. 26 cysteine pairs are disulfide-bonded: C3825/C3876, C3918/C3967, C4009/C4058, C4100/C4148, C4190/C4239, C4281/C4328, C4371/C4419, C4461/C4509, C4541/C4578, C4545/C4583, C4556/C4568, C4598/C4635, C4602/C4640, C4613/C4625, C4655/C4692, C4659/C4697, C4670/C4682, C4712/C4749, C4716/C4754, C4727/C4739, C4769/C4806, C4773/C4811, C4784/C4796, C4826/C4863, C4830/C4868, and C4841/C4853. N-linked (GlcNAc...) asparagine glycosylation occurs at N4029. N-linked (GlcNAc...) asparagine glycosylation is found at N4401 and N4491. TSP type-1 domains lie at 4529–4584 (HGGF…KPCP), 4586–4641 (DGSW…RPCP), 4643–4698 (HGAW…RNCP), 4700–4755 (HGKW…DPCP), 4757–4812 (HGNW…DMCP), and 4814–4869 (DGSW…QACP). N-linked (GlcNAc...) asparagine glycosylation is present at N4606. The Nidogen G2 beta-barrel domain occupies 4871 to 5093 (GPQRARGSVI…SKGDRSNQCP (223 aa)). N-linked (GlcNAc...) asparagine glycans are attached at residues N4894 and N5040. Positions 5107-5146 (DEDECAAGNPCSHSCHNAMGTYYCSCPKGLTIAADGRTCQ) constitute an EGF-like 1; calcium-binding domain. Disulfide bonds link C5111–C5121, C5117–C5130, and C5132–C5145. The EGF-like 2; calcium-binding domain maps to 5147–5191 (DIDECALGRHTCHAGQDCDNTIGSYRCVVRCGSGFRRTSDGLSCQ). Positions 5192-5229 (DINECQESSPCHQRCFNAIGSFHCGCEPGYQLKGRKCM) constitute an EGF-like 3; calcium-binding domain. 3 cysteine pairs are disulfide-bonded: C5196–C5206, C5202–C5215, and C5217–C5228. In terms of domain architecture, EGF-like 4; calcium-binding spans 5230-5271 (DVNECRQNVCRPDQHCKNTRGGYKCIDLCPNGMTKAENGTCI). An N-linked (GlcNAc...) asparagine glycan is attached at N5267. One can recognise an EGF-like 5; calcium-binding domain in the interval 5272-5307 (DIDECKDGTHQCRYNQICENTRGSYRCVCPRGYRSQ). Intrachain disulfides connect C5276–C5289, C5283–C5298, C5319–C5330, C5326–C5339, C5341–C5354, C5436–C5446, C5442–C5455, and C5457–C5470. The EGF-like 6; calcium-binding domain occupies 5315–5355 (DINECEQVPKPCAHQCSNTPGSFKCICPPGQHLLGDGKSCA). The 40-residue stretch at 5432–5471 (DIDECENTDACQHECKNTFGSYQCICPPGYQLTHNGKTCQ) folds into the EGF-like 7; calcium-binding domain. The N-linked (GlcNAc...) asparagine glycan is linked to N5615.

Expressed in hair follicles and in the dermis (at protein level). As to expression, expressed in skin fibroblasts and retinal pigment epithelium (RPE) cells.

It localises to the secreted. Its subcellular location is the extracellular space. It is found in the extracellular matrix. The protein resides in the basement membrane. The protein localises to the cytoplasm. It localises to the cell junction. Its subcellular location is the cleavage furrow. Its function is as follows. Involved in transforming growth factor beta-mediated rearrangement of the podocyte cytoskeleton which includes reduction of F-actin fibers and broadening, flattening and elongation of podocytes. Plays a role in basement membrane organization. May promote cleavage furrow maturation during cytokinesis in preimplantation embryos. May play a role in the architecture of adhesive and flexible epithelial cell junctions. May play a role during myocardial remodeling by imparting an effect on cardiac fibroblast migration. This chain is Hemicentin-1 (HMCN1), found in Homo sapiens (Human).